We begin with the raw amino-acid sequence, 475 residues long: Ribulose bisphosphate carboxylase large chain (475 aa).

Residues 1–2 constitute a propeptide that is removed on maturation; it reads MS. Proline 3 is modified (N-acetylproline). An N6,N6,N6-trimethyllysine modification is found at lysine 14. Positions 123 and 173 each coordinate substrate. The active-site Proton acceptor is the lysine 175. Lysine 177 serves as a coordination point for substrate. The Mg(2+) site is built by lysine 201, aspartate 203, and glutamate 204. Lysine 201 carries the post-translational modification N6-carboxylysine. The active-site Proton acceptor is histidine 294. Substrate is bound by residues arginine 295, histidine 327, and serine 379.

It belongs to the RuBisCO large chain family. Type I subfamily. Heterohexadecamer of 8 large chains and 8 small chains; disulfide-linked. The disulfide link is formed within the large subunit homodimers. Mg(2+) is required as a cofactor. In terms of processing, the disulfide bond which can form in the large chain dimeric partners within the hexadecamer appears to be associated with oxidative stress and protein turnover.

The protein resides in the plastid. The protein localises to the chloroplast. The catalysed reaction is 2 (2R)-3-phosphoglycerate + 2 H(+) = D-ribulose 1,5-bisphosphate + CO2 + H2O. It catalyses the reaction D-ribulose 1,5-bisphosphate + O2 = 2-phosphoglycolate + (2R)-3-phosphoglycerate + 2 H(+). Its function is as follows. RuBisCO catalyzes two reactions: the carboxylation of D-ribulose 1,5-bisphosphate, the primary event in carbon dioxide fixation, as well as the oxidative fragmentation of the pentose substrate in the photorespiration process. Both reactions occur simultaneously and in competition at the same active site. This is Ribulose bisphosphate carboxylase large chain from Amborella trichopoda.